The primary structure comprises 3164 residues: Large tegument protein deneddylase (3164 aa).

The deubiquitination activity stretch occupies residues 1 to 273 (MGGGNNTNPG…SETYLQDEAF (273 aa)). The Peptidase C76 domain maps to 45-263 (VVTGARNQFA…TAAALHLYGA (219 aa)). Catalysis depends on residues C65, D197, and H199. The segment at 289-508 (AGLGEPCVGV…GEDDGPTVPA (220 aa)) is disordered. Positions 308 to 321 (GPHPPTAAQSPPPT) are enriched in pro residues. Over residues 343–353 (PEAKRPNRAPD) the composition is skewed to basic and acidic residues. Pro residues predominate over residues 365–390 (PTDPPSADPPSADPPSAIPPPPPSAP). Over residues 416 to 432 (GRHRARYSAGLPKRRRP) the composition is skewed to basic residues. The segment at 426-432 (LPKRRRP) is nuclear localization signal. Positions 579-609 (LELCVIFFFERVLAFLIENGARTHTQAGVAG) are interaction with inner tegument protein. The interaction with UL37 stretch occupies residues 579–609 (LELCVIFFFERVLAFLIENGARTHTQAGVAG). Disordered stretches follow at residues 2296-2318 (QTLSPSGGREASPPAPPNALYRP), 2518-2552 (HPVYQRAPDDQSPSVPNPTPGPVDLVGAEGSLGPG), and 2583-3020 (ASDD…SLSG). Residues 2653–2667 (QSSPAPPDATAPRPP) are compositionally biased toward pro residues. A compositionally biased stretch (low complexity) spans 2668–2680 (ASSRASAASSSGS). The segment covering 2681–2690 (RARRHRRARS) has biased composition (basic residues). Positions 2722–2732 (PPAPPKPPEPA) are enriched in pro residues. A compositionally biased stretch (low complexity) spans 2834-2843 (PAEPTSSSPA). The segment covering 2844–2866 (GPSPPPPAVQPVAPPPTSGPPPT) has biased composition (pro residues). The span at 2886–2897 (TRQPVATPTTSA) shows a compositional bias: polar residues. 35 repeat units span residues 2911–2912 (PQ), 2913–2914 (PQ), 2915–2916 (PQ), 2917–2918 (PQ), 2919–2920 (PQ), 2921–2922 (PQ), 2923–2924 (PQ), 2925–2926 (PQ), 2927–2928 (PQ), 2929–2930 (PQ), 2931–2932 (PQ), 2933–2934 (PQ), 2935–2936 (PQ), 2937–2938 (PQ), 2939–2940 (PQ), 2941–2942 (PQ), 2943–2944 (PQ), 2945–2946 (PQ), 2947–2948 (PQ), 2949–2950 (PQ), 2951–2952 (PQ), 2953–2954 (PQ), 2955–2956 (PQ), 2957–2958 (PQ), 2959–2960 (PQ), 2961–2962 (PQ), 2963–2964 (PQ), 2965–2966 (PQ), 2967–2968 (PQ), 2969–2970 (PQ), 2971–2972 (PQ), 2973–2974 (PQ), 2975–2976 (PQ), 2977–2978 (PQ), and 2979–2980 (PQ). Residues 2911–2980 (PQPQPQPQPQ…PQPQPQPQPQ (70 aa)) form a 35 X 2 AA tandem repeats of P-Q region. A compositionally biased stretch (pro residues) spans 2912-2978 (QPQPQPQPQP…PQPQPQPQPQ (67 aa)). The segment covering 2999-3014 (NRPSVPASASSTNPRT) has biased composition (polar residues).

This sequence belongs to the herpesviridae large tegument protein family. In terms of assembly, interacts with host CUL1 and CUL4A; these interactions inhibit the E3 ligase activity of cullins. Interacts with inner tegument protein. Interacts with capsid vertex specific component CVC2. Interacts with the major capsid protein/MCP. Interacts with VP16; this interaction is important for outer tegument association to the capsid. May form homodimers. In terms of processing, proteolytically processed, possibly into several polypeptides. Enzymatic activity is only detectable following cleavage of the UL36 protein, which occurs late during viral replication.

Its subcellular location is the virion tegument. It is found in the host cytoplasm. The protein resides in the host nucleus. The catalysed reaction is Thiol-dependent hydrolysis of ester, thioester, amide, peptide and isopeptide bonds formed by the C-terminal Gly of ubiquitin (a 76-residue protein attached to proteins as an intracellular targeting signal).. Large tegument protein that plays multiple roles in the viral cycle. During viral entry, remains associated with the capsid while most of the tegument is detached and participates in the capsid transport toward the host nucleus. Plays a role in the routing of the capsid at the nuclear pore complex and subsequent uncoating. Within the host nucleus, acts as a deneddylase and promotes the degradation of nuclear CRLs (cullin-RING ubiquitin ligases) and thereby stabilizes nuclear CRL substrates, while cytoplasmic CRLs remain unaffected. These modifications prevent host cell cycle S-phase progression and create a favorable environment allowing efficient viral genome replication. Participates later in the secondary envelopment of capsids. Indeed, plays a linker role for the association of the outer viral tegument to the capsids together with the inner tegument protein. The sequence is that of Large tegument protein deneddylase from Human herpesvirus 1 (strain 17) (HHV-1).